The chain runs to 469 residues: ATP synthase subunit beta (469 aa).

156 to 163 (GGAGVGKT) contacts ATP.

This sequence belongs to the ATPase alpha/beta chains family. In terms of assembly, F-type ATPases have 2 components, CF(1) - the catalytic core - and CF(0) - the membrane proton channel. CF(1) has five subunits: alpha(3), beta(3), gamma(1), delta(1), epsilon(1). CF(0) has three main subunits: a(1), b(2) and c(9-12). The alpha and beta chains form an alternating ring which encloses part of the gamma chain. CF(1) is attached to CF(0) by a central stalk formed by the gamma and epsilon chains, while a peripheral stalk is formed by the delta and b chains.

It is found in the cell membrane. It carries out the reaction ATP + H2O + 4 H(+)(in) = ADP + phosphate + 5 H(+)(out). Its function is as follows. Produces ATP from ADP in the presence of a proton gradient across the membrane. The catalytic sites are hosted primarily by the beta subunits. This chain is ATP synthase subunit beta, found in Lactococcus lactis subsp. cremoris (strain SK11).